Consider the following 321-residue polypeptide: Ferredoxin--NADP reductase (321 aa).

FAD-binding residues include Glu33, Gln41, Tyr46, Val86, Leu119, Asp277, and Ser318.

The protein belongs to the ferredoxin--NADP reductase type 2 family. In terms of assembly, homodimer. Requires FAD as cofactor.

The enzyme catalyses 2 reduced [2Fe-2S]-[ferredoxin] + NADP(+) + H(+) = 2 oxidized [2Fe-2S]-[ferredoxin] + NADPH. The polypeptide is Ferredoxin--NADP reductase (Lactococcus lactis subsp. cremoris (strain MG1363)).